The primary structure comprises 103 residues: Cyclotide vibi-K (103 aa).

The first 9 residues, 1–9, serve as a signal peptide directing secretion; sequence AAFALPAFA. The propeptide occupies 10 to 69; the sequence is SFEKDVITPSVLEAVLNRKAPLSNIMMENDAILNVIANVKTVISNPVLEEALLKTNHGVN. Residues 70–99 constitute a cross-link (cyclopeptide (Gly-Asn)); that stretch reads GIPCGESCVWIPCLTSAVGCPCKSKVCYRN. 3 disulfide bridges follow: cysteine 73–cysteine 89, cysteine 77–cysteine 91, and cysteine 82–cysteine 96. The propeptide occupies 100-103; the sequence is SLDN.

In terms of processing, this is a cyclic peptide.

In terms of biological role, probably participates in a plant defense mechanism. The sequence is that of Cyclotide vibi-K from Viola biflora (Yellow wood violet).